The following is a 146-amino-acid chain: Large ribosomal subunit protein uL15 (146 aa).

The disordered stretch occupies residues 1–51 (MQLNTLKPAEGSKKNRRRVGRGIGSGLGKTAGRGHKGQKSRSGGFHKVGFE). The span at 21 to 31 (RGIGSGLGKTA) shows a compositional bias: gly residues.

It belongs to the universal ribosomal protein uL15 family. As to quaternary structure, part of the 50S ribosomal subunit.

Binds to the 23S rRNA. The polypeptide is Large ribosomal subunit protein uL15 (Polynucleobacter asymbioticus (strain DSM 18221 / CIP 109841 / QLW-P1DMWA-1) (Polynucleobacter necessarius subsp. asymbioticus)).